Reading from the N-terminus, the 91-residue chain is ATP synthase subunit c (91 aa).

Transmembrane regions (helical) follow at residues 4–24 (FTMC…GTGI) and 53–73 (IGLA…LIIL).

This sequence belongs to the ATPase C chain family. F-type ATPases have 2 components, F(1) - the catalytic core - and F(0) - the membrane proton channel. F(1) has five subunits: alpha(3), beta(3), gamma(1), delta(1), epsilon(1). F(0) has three main subunits: a(1), b(2) and c(10-14). The alpha and beta chains form an alternating ring which encloses part of the gamma chain. F(1) is attached to F(0) by a central stalk formed by the gamma and epsilon chains, while a peripheral stalk is formed by the delta and b chains.

It is found in the cell inner membrane. Functionally, f(1)F(0) ATP synthase produces ATP from ADP in the presence of a proton or sodium gradient. F-type ATPases consist of two structural domains, F(1) containing the extramembraneous catalytic core and F(0) containing the membrane proton channel, linked together by a central stalk and a peripheral stalk. During catalysis, ATP synthesis in the catalytic domain of F(1) is coupled via a rotary mechanism of the central stalk subunits to proton translocation. In terms of biological role, key component of the F(0) channel; it plays a direct role in translocation across the membrane. A homomeric c-ring of between 10-14 subunits forms the central stalk rotor element with the F(1) delta and epsilon subunits. In Geotalea uraniireducens (strain Rf4) (Geobacter uraniireducens), this protein is ATP synthase subunit c.